Here is a 522-residue protein sequence, read N- to C-terminus: Kelch domain-containing protein 4 (522 aa).

Residues 1-10 (MGKKGKKEKK) show a composition bias toward basic residues. The interval 1-33 (MGKKGKKEKKGRGAEKTAAKMEKKVSKRSRKEE) is disordered. The span at 11–24 (GRGAEKTAAKMEKK) shows a compositional bias: basic and acidic residues. Kelch repeat units follow at residues 77-129 (ELIL…VVPQ), 133-187 (QLWV…AWKR), 188-241 (QLIL…VTPQ), 243-289 (GIII…MNPS), and 308-361 (QTLF…RRGR). Disordered regions lie at residues 346–378 (QLKG…GAGT), 402–432 (LAAP…PCPR), and 481–522 (DPET…GAED). Phosphoserine is present on residues serine 413 and serine 418. One copy of the Kelch 6 repeat lies at 443–494 (VLYVYGGMFEAGDRQVTLSDLHCLDLHRMEAWKALVEMDPETQEWLEETDSE).

The chain is Kelch domain-containing protein 4 (KLHDC4) from Pongo abelii (Sumatran orangutan).